The following is a 113-amino-acid chain: MTTPSVSAISAYRQLLRATRIAFKDDYRVLLAARTEARKQFDQHKRTAVDTPMQIQHALETASILRHNIVQGARDAEKEDAKWELRIHDDIERGDNDSVKIGGKKVKIEKACS.

This sequence belongs to the complex I LYR family. MZM1 subfamily. Interacts with RIP1.

The protein resides in the mitochondrion matrix. Functionally, assembly factor required for Rieske Fe-S protein RIP1 incorporation into the cytochrome b-c1 (CIII) complex. Functions as a chaperone, binding to this subunit within the mitochondrial matrix and stabilizing it prior to its translocation and insertion into the late CIII dimeric intermediate within the mitochondrial inner membrane. Modulates the mitochondrial matrix zinc pool. This chain is Mitochondrial zinc maintenance protein 1, mitochondrial (MZM1), found in Talaromyces stipitatus (strain ATCC 10500 / CBS 375.48 / QM 6759 / NRRL 1006) (Penicillium stipitatum).